The sequence spans 233 residues: Protein Thf1 (233 aa).

The stretch at 183–205 (DKLSKDLELYRSNLDKMTQALAV) forms a coiled coil. Residues 213-233 (DRKKREQRQQQASTPVAPPNE) are disordered.

It belongs to the THF1 family.

Functionally, may be involved in photosynthetic membrane biogenesis. This Trichormus variabilis (strain ATCC 29413 / PCC 7937) (Anabaena variabilis) protein is Protein Thf1.